A 432-amino-acid chain; its full sequence is Thiol-specific monooxygenase (432 aa).

Residues 13–17 and 46–47 each bind FAD; these read GGGPG and VW. Residue 65-66 participates in NADP(+) binding; the sequence is TN. 117–118 lines the FAD pocket; the sequence is EV. 199 to 202 lines the NADP(+) pocket; it reads SGQD.

This sequence belongs to the FMO family. Monomer. Requires FAD as cofactor.

Functionally, flavin-dependent oxidation of thiol-containing compounds. Probably required for the correct folding of disulfide-bonded proteins. This Saccharomyces cerevisiae (strain ATCC 204508 / S288c) (Baker's yeast) protein is Thiol-specific monooxygenase (FMO1).